A 992-amino-acid polypeptide reads, in one-letter code: Ankyrin repeat domain-containing protein 18A (992 aa).

5 ANK repeats span residues 67-96 (KDRT…QIDI), 100-129 (LNRT…NPNI), 133-162 (YGNT…NIEA), 166-195 (EGNT…NIHA), and 199-228 (FKRT…RISS). The disordered stretch occupies residues 262 to 320 (NHLRNDNQETAAMKPANLKKRKERAKAEHNLKVASEEKQERLQRSENKQPQDSQSYGKK). 4 coiled-coil regions span residues 278–310 (NLKK…ENKQ), 378–618 (KMIT…AERE), 683–713 (ISLL…CLEM), and 743–899 (FKKL…EAFA). The span at 286-310 (AKAEHNLKVASEEKQERLQRSENKQ) shows a compositional bias: basic and acidic residues.

The chain is Ankyrin repeat domain-containing protein 18A (ANKRD18A) from Homo sapiens (Human).